Reading from the N-terminus, the 70-residue chain is Cytochrome c oxidase subunit 8B, mitochondrial (70 aa).

Residues 1-24 (MLRLAPTVRLLQAPLRGWAVPKAH) constitute a mitochondrion transit peptide. The Mitochondrial matrix segment spans residues 25-35 (ITAKPAKTPTS). Residues 36–59 (PKEQAIGLSVTFLSFLLPAGWVLY) traverse the membrane as a helical segment. The Mitochondrial intermembrane portion of the chain corresponds to 60-70 (HLDNYKKSSAA).

The protein belongs to the cytochrome c oxidase VIII family. Component of the cytochrome c oxidase (complex IV, CIV), a multisubunit enzyme composed of 14 subunits. The complex is composed of a catalytic core of 3 subunits MT-CO1, MT-CO2 and MT-CO3, encoded in the mitochondrial DNA, and 11 supernumerary subunits COX4I1 (or COX4I2), COX5A, COX5B, COX6A2 (or COX6A1), COX6B1 (or COX6B2), COX6C, COX7A1 (or COX7A2), COX7B, COX7C, COX8B and NDUFA4, which are encoded in the nuclear genome. The complex exists as a monomer or a dimer and forms supercomplexes (SCs) in the inner mitochondrial membrane with NADH-ubiquinone oxidoreductase (complex I, CI) and ubiquinol-cytochrome c oxidoreductase (cytochrome b-c1 complex, complex III, CIII), resulting in different assemblies (supercomplex SCI(1)III(2)IV(1) and megacomplex MCI(2)III(2)IV(2)).

It is found in the mitochondrion inner membrane. The protein operates within energy metabolism; oxidative phosphorylation. Its function is as follows. Component of the cytochrome c oxidase, the last enzyme in the mitochondrial electron transport chain which drives oxidative phosphorylation. The respiratory chain contains 3 multisubunit complexes succinate dehydrogenase (complex II, CII), ubiquinol-cytochrome c oxidoreductase (cytochrome b-c1 complex, complex III, CIII) and cytochrome c oxidase (complex IV, CIV), that cooperate to transfer electrons derived from NADH and succinate to molecular oxygen, creating an electrochemical gradient over the inner membrane that drives transmembrane transport and the ATP synthase. Cytochrome c oxidase is the component of the respiratory chain that catalyzes the reduction of oxygen to water. Electrons originating from reduced cytochrome c in the intermembrane space (IMS) are transferred via the dinuclear copper A center (CU(A)) of subunit 2 and heme A of subunit 1 to the active site in subunit 1, a binuclear center (BNC) formed by heme A3 and copper B (CU(B)). The BNC reduces molecular oxygen to 2 water molecules using 4 electrons from cytochrome c in the IMS and 4 protons from the mitochondrial matrix. In Bos taurus (Bovine), this protein is Cytochrome c oxidase subunit 8B, mitochondrial (COX8B).